The sequence spans 651 residues: Acetyl-coenzyme A synthetase 1 (651 aa).

Residues 191-194 (RGGK), Thr311, and Asn335 contribute to the CoA site. Residues 387–389 (GEP), 411–416 (DTWWQT), Asp500, and Arg515 contribute to the ATP site. Residue Ser523 coordinates CoA. An ATP-binding site is contributed by Arg526. The Mg(2+) site is built by Val537, His539, and Val542. Arg584 is a CoA binding site. Lys609 carries the post-translational modification N6-acetyllysine.

This sequence belongs to the ATP-dependent AMP-binding enzyme family. Mg(2+) serves as cofactor. Post-translationally, acetylated. Deacetylation by the SIR2-homolog deacetylase activates the enzyme.

It carries out the reaction acetate + ATP + CoA = acetyl-CoA + AMP + diphosphate. Catalyzes the conversion of acetate into acetyl-CoA (AcCoA), an essential intermediate at the junction of anabolic and catabolic pathways. AcsA undergoes a two-step reaction. In the first half reaction, AcsA combines acetate with ATP to form acetyl-adenylate (AcAMP) intermediate. In the second half reaction, it can then transfer the acetyl group from AcAMP to the sulfhydryl group of CoA, forming the product AcCoA. In Pseudomonas aeruginosa (strain ATCC 15692 / DSM 22644 / CIP 104116 / JCM 14847 / LMG 12228 / 1C / PRS 101 / PAO1), this protein is Acetyl-coenzyme A synthetase 1.